A 606-amino-acid polypeptide reads, in one-letter code: Protein couch potato (606 aa).

Residues 81–105 carry the Nuclear localization signal motif; the sequence is IKRRPTLPQTPASAPQVLSPSPKRQ. Tandem repeats lie at residues 91–95, 109–113, 114–118, 122–126, 128–132, 134–138, and 159–163. The 7 X 5 AA approximate repeats of P-V-S-V-P stretch occupies residues 91–164; that stretch reads PASAPQVLSP…SHSHPISHPH (74 aa). Disordered regions lie at residues 147 to 166, 282 to 311, 324 to 365, and 388 to 410; these read QIAHTHQISHSHPISHPHHH, QQQQHILLSSGSSSSKHNSNNNSNTSAGAA, VPTT…TSAA, and PATSAVSDSNNNLNSSSSSNSNS. The segment covering 344–365 has biased composition (low complexity); sequence SNSATASAPTTPSPAGSVTSAA. An RRM domain is found at 442 to 524; the sequence is RTLFVSGLPM…QTIRLEFAKS (83 aa).

As to expression, expressed in neural precursors and their daughter cells in the embryonic peripheral nervous system. Less abundant in a number of glial cells in the peripheral and central nervous systems and also present at low levels in the developing gut.

It localises to the nucleus. May play a role in the development or function of the peripheral nervous system by regulating the processing of nervous system-specific transcripts. This chain is Protein couch potato (cpo), found in Drosophila melanogaster (Fruit fly).